The primary structure comprises 82 residues: ATP synthase subunit c, chloroplastic (82 aa).

Helical transmembrane passes span 7–27 (GASVIAAGLAIGLASIGPGIG) and 57–77 (LAFMESLTIYGLVVALCLLFA).

It belongs to the ATPase C chain family. As to quaternary structure, F-type ATPases have 2 components, F(1) - the catalytic core - and F(0) - the membrane proton channel. F(1) has five subunits: alpha(3), beta(3), gamma(1), delta(1), epsilon(1). F(0) has four main subunits: a(1), b(1), b'(1) and c(10-14). The alpha and beta chains form an alternating ring which encloses part of the gamma chain. F(1) is attached to F(0) by a central stalk formed by the gamma and epsilon chains, while a peripheral stalk is formed by the delta, b and b' chains.

The protein resides in the plastid. It is found in the chloroplast thylakoid membrane. Its function is as follows. F(1)F(0) ATP synthase produces ATP from ADP in the presence of a proton or sodium gradient. F-type ATPases consist of two structural domains, F(1) containing the extramembraneous catalytic core and F(0) containing the membrane proton channel, linked together by a central stalk and a peripheral stalk. During catalysis, ATP synthesis in the catalytic domain of F(1) is coupled via a rotary mechanism of the central stalk subunits to proton translocation. Functionally, key component of the F(0) channel; it plays a direct role in translocation across the membrane. A homomeric c-ring of between 10-14 subunits forms the central stalk rotor element with the F(1) delta and epsilon subunits. The sequence is that of ATP synthase subunit c, chloroplastic from Emiliania huxleyi (Coccolithophore).